Consider the following 90-residue polypeptide: Phosphoribosyl-ATP pyrophosphatase (90 aa).

This sequence belongs to the PRA-PH family.

The protein resides in the cytoplasm. It catalyses the reaction 1-(5-phospho-beta-D-ribosyl)-ATP + H2O = 1-(5-phospho-beta-D-ribosyl)-5'-AMP + diphosphate + H(+). It functions in the pathway amino-acid biosynthesis; L-histidine biosynthesis; L-histidine from 5-phospho-alpha-D-ribose 1-diphosphate: step 2/9. The chain is Phosphoribosyl-ATP pyrophosphatase from Streptomyces griseus subsp. griseus (strain JCM 4626 / CBS 651.72 / NBRC 13350 / KCC S-0626 / ISP 5235).